Here is a 231-residue protein sequence, read N- to C-terminus: Urease accessory protein UreF (231 aa).

This sequence belongs to the UreF family. In terms of assembly, ureD, UreF and UreG form a complex that acts as a GTP-hydrolysis-dependent molecular chaperone, activating the urease apoprotein by helping to assemble the nickel containing metallocenter of UreC. The UreE protein probably delivers the nickel.

It is found in the cytoplasm. In terms of biological role, required for maturation of urease via the functional incorporation of the urease nickel metallocenter. The sequence is that of Urease accessory protein UreF from Marinobacter nauticus (strain ATCC 700491 / DSM 11845 / VT8) (Marinobacter aquaeolei).